The primary structure comprises 218 residues: 2-phospho-L-lactate guanylyltransferase (218 aa).

Belongs to the CofC family. As to quaternary structure, homodimer.

The enzyme catalyses (2S)-2-phospholactate + GTP + H(+) = (2S)-lactyl-2-diphospho-5'-guanosine + diphosphate. It participates in cofactor biosynthesis; coenzyme F420 biosynthesis. In terms of biological role, guanylyltransferase that catalyzes the activation of (2S)-2-phospholactate (2-PL) as (2S)-lactyl-2-diphospho-5'-guanosine, via the condensation of 2-PL with GTP. It is involved in the biosynthesis of coenzyme F420, a hydride carrier cofactor. The sequence is that of 2-phospho-L-lactate guanylyltransferase from Methanocaldococcus fervens (strain DSM 4213 / JCM 15782 / AG86) (Methanococcus fervens).